A 296-amino-acid polypeptide reads, in one-letter code: Phosphoribosylaminoimidazole-succinocarboxamide synthase (296 aa).

This sequence belongs to the SAICAR synthetase family.

It catalyses the reaction 5-amino-1-(5-phospho-D-ribosyl)imidazole-4-carboxylate + L-aspartate + ATP = (2S)-2-[5-amino-1-(5-phospho-beta-D-ribosyl)imidazole-4-carboxamido]succinate + ADP + phosphate + 2 H(+). It participates in purine metabolism; IMP biosynthesis via de novo pathway; 5-amino-1-(5-phospho-D-ribosyl)imidazole-4-carboxamide from 5-amino-1-(5-phospho-D-ribosyl)imidazole-4-carboxylate: step 1/2. This is Phosphoribosylaminoimidazole-succinocarboxamide synthase from Thioalkalivibrio sulfidiphilus (strain HL-EbGR7).